The sequence spans 528 residues: Peptide chain release factor 3 (528 aa).

In terms of domain architecture, tr-type G spans glutamate 11 to leucine 279. GTP-binding positions include serine 20 to threonine 27, aspartate 88 to histidine 92, and asparagine 142 to aspartate 145.

The protein belongs to the TRAFAC class translation factor GTPase superfamily. Classic translation factor GTPase family. PrfC subfamily.

The protein resides in the cytoplasm. Its function is as follows. Increases the formation of ribosomal termination complexes and stimulates activities of RF-1 and RF-2. It binds guanine nucleotides and has strong preference for UGA stop codons. It may interact directly with the ribosome. The stimulation of RF-1 and RF-2 is significantly reduced by GTP and GDP, but not by GMP. The chain is Peptide chain release factor 3 from Psychromonas ingrahamii (strain DSM 17664 / CCUG 51855 / 37).